Consider the following 299-residue polypeptide: 4-hydroxy-tetrahydrodipicolinate synthase (299 aa).

Position 47 (Thr-47) interacts with pyruvate. The active-site Proton donor/acceptor is the Tyr-136. Catalysis depends on Lys-164, which acts as the Schiff-base intermediate with substrate. Ala-205 is a binding site for pyruvate.

Belongs to the DapA family. In terms of assembly, homotetramer; dimer of dimers.

It localises to the cytoplasm. The enzyme catalyses L-aspartate 4-semialdehyde + pyruvate = (2S,4S)-4-hydroxy-2,3,4,5-tetrahydrodipicolinate + H2O + H(+). It functions in the pathway amino-acid biosynthesis; L-lysine biosynthesis via DAP pathway; (S)-tetrahydrodipicolinate from L-aspartate: step 3/4. Functionally, catalyzes the condensation of (S)-aspartate-beta-semialdehyde [(S)-ASA] and pyruvate to 4-hydroxy-tetrahydrodipicolinate (HTPA). This Pediococcus pentosaceus (strain ATCC 25745 / CCUG 21536 / LMG 10740 / 183-1w) protein is 4-hydroxy-tetrahydrodipicolinate synthase.